A 210-amino-acid chain; its full sequence is Large ribosomal subunit protein uL3 (210 aa).

The interval 122–155 (NQKRNNFGRGPMSHGSKNHRAPGSIGAGTTPGRV) is disordered.

This sequence belongs to the universal ribosomal protein uL3 family. In terms of assembly, part of the 50S ribosomal subunit. Forms a cluster with proteins L14 and L19.

One of the primary rRNA binding proteins, it binds directly near the 3'-end of the 23S rRNA, where it nucleates assembly of the 50S subunit. In Nostoc punctiforme (strain ATCC 29133 / PCC 73102), this protein is Large ribosomal subunit protein uL3.